Consider the following 210-residue polypeptide: Ribosomal RNA large subunit methyltransferase E (210 aa).

Residues G61, W63, D81, D97, and D122 each contribute to the S-adenosyl-L-methionine site. K162 functions as the Proton acceptor in the catalytic mechanism. Residues 187–196 show a composition bias toward basic and acidic residues; the sequence is KPEASRKRSP. The disordered stretch occupies residues 187 to 210; sequence KPEASRKRSPEVYALGQGKRAHMK.

Belongs to the class I-like SAM-binding methyltransferase superfamily. RNA methyltransferase RlmE family.

Its subcellular location is the cytoplasm. It carries out the reaction uridine(2552) in 23S rRNA + S-adenosyl-L-methionine = 2'-O-methyluridine(2552) in 23S rRNA + S-adenosyl-L-homocysteine + H(+). Functionally, specifically methylates the uridine in position 2552 of 23S rRNA at the 2'-O position of the ribose in the fully assembled 50S ribosomal subunit. This Stenotrophomonas maltophilia (strain R551-3) protein is Ribosomal RNA large subunit methyltransferase E.